Consider the following 258-residue polypeptide: Imidazole glycerol phosphate synthase subunit HisF (258 aa).

Active-site residues include aspartate 11 and aspartate 130.

This sequence belongs to the HisA/HisF family. Heterodimer of HisH and HisF.

The protein localises to the cytoplasm. It carries out the reaction 5-[(5-phospho-1-deoxy-D-ribulos-1-ylimino)methylamino]-1-(5-phospho-beta-D-ribosyl)imidazole-4-carboxamide + L-glutamine = D-erythro-1-(imidazol-4-yl)glycerol 3-phosphate + 5-amino-1-(5-phospho-beta-D-ribosyl)imidazole-4-carboxamide + L-glutamate + H(+). Its pathway is amino-acid biosynthesis; L-histidine biosynthesis; L-histidine from 5-phospho-alpha-D-ribose 1-diphosphate: step 5/9. Its function is as follows. IGPS catalyzes the conversion of PRFAR and glutamine to IGP, AICAR and glutamate. The HisF subunit catalyzes the cyclization activity that produces IGP and AICAR from PRFAR using the ammonia provided by the HisH subunit. In Shigella boydii serotype 4 (strain Sb227), this protein is Imidazole glycerol phosphate synthase subunit HisF.